A 1108-amino-acid polypeptide reads, in one-letter code: cGMP-inhibited 3',5'-cyclic phosphodiesterase 3B (1108 aa).

Positions 1–11 (MRKDERERDTP) are enriched in basic and acidic residues. A disordered region spans residues 1 to 32 (MRKDERERDTPAMRSPPPPPPPATATAASPPE). The interaction with RAPGEF3 stretch occupies residues 1–32 (MRKDERERDTPAMRSPPPPPPPATATAASPPE). Positions 14–23 (RSPPPPPPPA) are enriched in pro residues. Position 15 is a phosphoserine (Ser15). Transmembrane regions (helical) follow at residues 73–93 (AGAR…LLGA), 114–134 (LSLS…CFLT), 144–164 (AGSW…FAAW), 175–195 (AAAA…LTLA), 204–224 (VLVL…LGAL), and 231–251 (LLSC…DHFF). Ser279 carries the post-translational modification Phosphoserine; by PKB/AKT1 or PKB/AKT2. Residues Ser280 and Ser427 each carry the phosphoserine modification. The tract at residues 405–448 (DRKLHKGLSSKPSFPTAQLRRSSGASGLLTSEHHSRWDRSGGKR) is disordered. Positions 414 to 433 (SKPSFPTAQLRRSSGASGLL) are enriched in polar residues. An interaction with PIK3R6 region spans residues 421-445 (AQLRRSSGASGLLTSEHHSRWDRSG). Basic and acidic residues predominate over residues 435-445 (SEHHSRWDRSG). The PDEase domain maps to 633–1070 (PNIDQEVLLD…KIWKEIIEEE (438 aa)). His719 acts as the Proton donor in catalysis. AMP is bound at residue His719. Mg(2+) contacts are provided by His723, His803, Asp804, and Asp919. 3 residues coordinate AMP: Asp804, Asp919, and Gln970. A compositionally biased stretch (acidic residues) spans 999–1033 (EEGDDTESDDDDDDDDDDDDDDDEELDSDDEETED). The tract at residues 999–1042 (EEGDDTESDDDDDDDDDDDDDDDEELDSDDEETEDNLNPKPQRR) is disordered.

It belongs to the cyclic nucleotide phosphodiesterase family. PDE3 subfamily. Homodimer. Interacts with PIK3CG; regulates PDE3B activity and thereby cAMP levels in cells. Interacts with RAPGEF3 and PIK3R6; form a signaling complex that regulates phosphatidylinositol 3-kinase gamma in angiogenesis. Interacts with ABHD15; this interaction regulates PDE3B's stability and expression and, thereby, impacts the antilipolytic action of insulin. It depends on Mg(2+) as a cofactor. Requires Mn(2+) as cofactor. Phosphorylation at Ser-279 mediates insulin-induced activation of PDE3B. In terms of tissue distribution, abundant in adipose tissues.

The protein localises to the membrane. It catalyses the reaction a nucleoside 3',5'-cyclic phosphate + H2O = a nucleoside 5'-phosphate + H(+). The catalysed reaction is 3',5'-cyclic AMP + H2O = AMP + H(+). It carries out the reaction 3',5'-cyclic GMP + H2O = GMP + H(+). With respect to regulation, inhibited by cGMP. Its function is as follows. Cyclic nucleotide phosphodiesterase with a dual-specificity for the second messengers cAMP and cGMP, which are key regulators of many important physiological processes. Regulates angiogenesis by inhibiting the cAMP-dependent guanine nucleotide exchange factor RAPGEF3 and downstream phosphatidylinositol 3-kinase gamma-mediated signaling. Controls cardiac contractility by reducing cAMP concentration in cardiocytes. The chain is cGMP-inhibited 3',5'-cyclic phosphodiesterase 3B from Rattus norvegicus (Rat).